The sequence spans 196 residues: Ribosome maturation factor RimP (196 aa).

Positions 163-196 (GLAPSKPTGPAPKRPKPNTNSSSNEPAAKKPRAE) are disordered.

Belongs to the RimP family.

It localises to the cytoplasm. Required for maturation of 30S ribosomal subunits. The polypeptide is Ribosome maturation factor RimP (Stenotrophomonas maltophilia (strain K279a)).